The chain runs to 121 residues: Anther-specific protein SF2 (121 aa).

An N-terminal signal peptide occupies residues Met1–Ser21. Asn115 carries an N-linked (GlcNAc...) asparagine glycan.

As to expression, epidermal anther cells.

It is found in the secreted. It localises to the cell wall. Its function is as follows. Anther-specific cell wall protein which could contribute to the cell wall architecture of epidermal anther cells via intermolecular disulfide bridges. This is Anther-specific protein SF2 from Helianthus annuus (Common sunflower).